We begin with the raw amino-acid sequence, 155 residues long: Small ribosomal subunit protein uS7 (155 aa).

Belongs to the universal ribosomal protein uS7 family. As to quaternary structure, part of the 30S ribosomal subunit. Contacts proteins S9 and S11.

In terms of biological role, one of the primary rRNA binding proteins, it binds directly to 16S rRNA where it nucleates assembly of the head domain of the 30S subunit. Is located at the subunit interface close to the decoding center, probably blocks exit of the E-site tRNA. The chain is Small ribosomal subunit protein uS7 from Chloroherpeton thalassium (strain ATCC 35110 / GB-78).